The primary structure comprises 511 residues: Maturase K (511 aa).

It belongs to the intron maturase 2 family. MatK subfamily.

The protein resides in the plastid. The protein localises to the chloroplast. Its function is as follows. Usually encoded in the trnK tRNA gene intron. Probably assists in splicing its own and other chloroplast group II introns. The polypeptide is Maturase K (Diplacus aurantiacus (Orange bush monkey flower)).